The primary structure comprises 75 residues: MLIPHDQLEVDTLTRLIEDFVTREGTDNGDETPLETRVLRVRQALTKGQAVIVFDPDSEQCQLMLKHDVPKELFD.

This sequence belongs to the UPF0270 family.

The protein is UPF0270 protein PFL_4336 of Pseudomonas fluorescens (strain ATCC BAA-477 / NRRL B-23932 / Pf-5).